The following is a 735-amino-acid chain: Phosphoribosylformylglycinamidine synthase subunit PurL (735 aa).

The active site involves H48. Y51 and K90 together coordinate ATP. E92 is a Mg(2+) binding site. Residues 93 to 96 (SHNH) and R115 contribute to the substrate site. H94 (proton acceptor) is an active-site residue. D116 contacts Mg(2+). Q239 serves as a coordination point for substrate. D267 contacts Mg(2+). Position 311–313 (311–313 (ESQ)) interacts with substrate. 2 residues coordinate ATP: D492 and G529. N530 is a binding site for Mg(2+). S532 provides a ligand contact to substrate.

This sequence belongs to the FGAMS family. Monomer. Part of the FGAM synthase complex composed of 1 PurL, 1 PurQ and 2 PurS subunits.

It localises to the cytoplasm. The enzyme catalyses N(2)-formyl-N(1)-(5-phospho-beta-D-ribosyl)glycinamide + L-glutamine + ATP + H2O = 2-formamido-N(1)-(5-O-phospho-beta-D-ribosyl)acetamidine + L-glutamate + ADP + phosphate + H(+). It participates in purine metabolism; IMP biosynthesis via de novo pathway; 5-amino-1-(5-phospho-D-ribosyl)imidazole from N(2)-formyl-N(1)-(5-phospho-D-ribosyl)glycinamide: step 1/2. In terms of biological role, part of the phosphoribosylformylglycinamidine synthase complex involved in the purines biosynthetic pathway. Catalyzes the ATP-dependent conversion of formylglycinamide ribonucleotide (FGAR) and glutamine to yield formylglycinamidine ribonucleotide (FGAM) and glutamate. The FGAM synthase complex is composed of three subunits. PurQ produces an ammonia molecule by converting glutamine to glutamate. PurL transfers the ammonia molecule to FGAR to form FGAM in an ATP-dependent manner. PurS interacts with PurQ and PurL and is thought to assist in the transfer of the ammonia molecule from PurQ to PurL. The chain is Phosphoribosylformylglycinamidine synthase subunit PurL from Bradyrhizobium sp. (strain BTAi1 / ATCC BAA-1182).